Reading from the N-terminus, the 702-residue chain is Arylphorin subunit alpha (702 aa).

The N-terminal stretch at Met1–Ser16 is a signal peptide. N-linked (GlcNAc...) asparagine glycans are attached at residues Asn75 and Asn214.

It belongs to the hemocyanin family. In terms of assembly, arylphorin is a hexamer of subunits alpha and beta. As to expression, fat body.

The protein resides in the secreted. It is found in the extracellular space. Its function is as follows. Arylphorin is a larval storage protein (LSP) which may serve as a storage protein used primarily as a source of aromatic amino acids for protein synthesis during metamorphosis. It is a constituent of the sclerotizing system of the cuticle, and serves as a carrier for ecdysteroid hormone. The polypeptide is Arylphorin subunit alpha (Manduca sexta (Tobacco hawkmoth)).